The primary structure comprises 591 residues: Aspartate--tRNA ligase (591 aa).

Glutamate 176 provides a ligand contact to L-aspartate. The aspartate stretch occupies residues 200 to 203 (QILK). L-aspartate is bound at residue arginine 222. Residues 222 to 224 (RDE) and glutamine 231 each bind ATP. Histidine 450 is a binding site for L-aspartate. Glutamate 484 lines the ATP pocket. An L-aspartate-binding site is contributed by arginine 491. Position 536–539 (536–539 (GLDR)) interacts with ATP.

The protein belongs to the class-II aminoacyl-tRNA synthetase family. Type 1 subfamily. In terms of assembly, homodimer.

The protein resides in the cytoplasm. It catalyses the reaction tRNA(Asp) + L-aspartate + ATP = L-aspartyl-tRNA(Asp) + AMP + diphosphate. Functionally, catalyzes the attachment of L-aspartate to tRNA(Asp) in a two-step reaction: L-aspartate is first activated by ATP to form Asp-AMP and then transferred to the acceptor end of tRNA(Asp). The sequence is that of Aspartate--tRNA ligase from Listeria monocytogenes serotype 4a (strain HCC23).